We begin with the raw amino-acid sequence, 312 residues long: Acetyl-coenzyme A carboxylase carboxyl transferase subunit beta (312 aa).

The region spanning 24–293 is the CoA carboxyltransferase N-terminal domain; sequence LWIKCPDSGQ…VEHAKPAPQL (270 aa). The disordered stretch occupies residues 286 to 312; that stretch reads HAKPAPQLPPPAKPAETAEAPAVATSA. Residues 299 to 312 are compositionally biased toward low complexity; the sequence is PAETAEAPAVATSA.

The protein belongs to the AccD/PCCB family. Acetyl-CoA carboxylase is a heterohexamer composed of biotin carboxyl carrier protein (AccB), biotin carboxylase (AccC) and two subunits each of ACCase subunit alpha (AccA) and ACCase subunit beta (AccD).

The protein resides in the cytoplasm. The catalysed reaction is N(6)-carboxybiotinyl-L-lysyl-[protein] + acetyl-CoA = N(6)-biotinyl-L-lysyl-[protein] + malonyl-CoA. Its pathway is lipid metabolism; malonyl-CoA biosynthesis; malonyl-CoA from acetyl-CoA: step 1/1. Component of the acetyl coenzyme A carboxylase (ACC) complex. Biotin carboxylase (BC) catalyzes the carboxylation of biotin on its carrier protein (BCCP) and then the CO(2) group is transferred by the transcarboxylase to acetyl-CoA to form malonyl-CoA. This is Acetyl-coenzyme A carboxylase carboxyl transferase subunit beta from Bradyrhizobium sp. (strain ORS 278).